Reading from the N-terminus, the 690-residue chain is BURP domain-containing protein 14 (690 aa).

An N-terminal signal peptide occupies residues 1–26 (MAPPRHARLVAATIAVLLCHLPRSAA). Residues 134 to 163 (GSSWSKSSSDGDGAAAAAAPAGGGGGGGGG) are disordered. Over residues 135-153 (SSWSKSSSDGDGAAAAAAP) the composition is skewed to low complexity. A compositionally biased stretch (gly residues) spans 154-163 (AGGGGGGGGG). Asn-178 carries an N-linked (GlcNAc...) asparagine glycan. Over residues 201-211 (SNGGGGGGGGV) the composition is skewed to gly residues. The segment at 201 to 232 (SNGGGGGGGGVDSFRRYGKGSQGRNDSFTSYE) is disordered. 6 N-linked (GlcNAc...) asparagine glycosylation sites follow: Asn-225, Asn-317, Asn-379, Asn-432, Asn-450, and Asn-601. The 213-residue stretch at 477–689 (FFRERDLVAG…FQGDMTWTVA (213 aa)) folds into the BURP domain.

As to expression, expressed in panicles.

The protein is BURP domain-containing protein 14 (BURP14) of Oryza sativa subsp. japonica (Rice).